Reading from the N-terminus, the 792-residue chain is Phenylalanine--tRNA ligase beta subunit (792 aa).

A tRNA-binding domain is found at 39-154; it reads LYSFASVITA…EATPLGEDLA (116 aa). Positions 403 to 480 constitute a B5 domain; it reads RELKEVALRP…ESWNIETQNP (78 aa). The Mg(2+) site is built by aspartate 456, aspartate 462, glutamate 465, and glutamate 466. The FDX-ACB domain occupies 695 to 791; that stretch reads AIYPSSFRDL…LLTDTKGTIN (97 aa).

Belongs to the phenylalanyl-tRNA synthetase beta subunit family. Type 1 subfamily. As to quaternary structure, tetramer of two alpha and two beta subunits. Mg(2+) is required as a cofactor.

Its subcellular location is the cytoplasm. It carries out the reaction tRNA(Phe) + L-phenylalanine + ATP = L-phenylalanyl-tRNA(Phe) + AMP + diphosphate + H(+). The sequence is that of Phenylalanine--tRNA ligase beta subunit (pheT) from Chlamydia pneumoniae (Chlamydophila pneumoniae).